The following is a 205-amino-acid chain: Small ribosomal subunit protein uS2 (205 aa).

Belongs to the universal ribosomal protein uS2 family.

This is Small ribosomal subunit protein uS2 (rps2) from Aeropyrum pernix (strain ATCC 700893 / DSM 11879 / JCM 9820 / NBRC 100138 / K1).